Reading from the N-terminus, the 894-residue chain is Nitrate reductase [NADPH] (894 aa).

Residues 1–79 (MAVKSQLGVT…PEDLKTPDHR (79 aa)) are disordered. Over residues 7 to 16 (LGVTYTTKTF) the composition is skewed to polar residues. Residues 69–79 (LPEDLKTPDHR) show a composition bias toward basic and acidic residues. Cysteine 169 is a Mo-molybdopterin binding site. The 76-residue stretch at 535-610 (VRIISLEELK…MPQYHIGTLN (76 aa)) folds into the Cytochrome b5 heme-binding domain. Heme contacts are provided by histidine 570 and histidine 593. In terms of domain architecture, FAD-binding FR-type spans 638–749 (KYWSKAILET…KGPVGKFEYL (112 aa)). Residues 692-695 (RAYT), 709-713 (LIKIY), 723-725 (KMT), serine 773, and threonine 776 contribute to the FAD site.

This sequence belongs to the nitrate reductase family. Homodimer. FAD serves as cofactor. It depends on heme as a cofactor. Mo-molybdopterin is required as a cofactor.

It carries out the reaction nitrite + NADP(+) + H2O = nitrate + NADPH + H(+). Its function is as follows. Nitrate reductase is a key enzyme involved in the first step of nitrate assimilation in plants, fungi and bacteria. The chain is Nitrate reductase [NADPH] (NIA) from Beauveria bassiana (White muscardine disease fungus).